The primary structure comprises 205 residues: Holliday junction branch migration complex subunit RuvA (205 aa).

The tract at residues 1 to 64 (MIGKLKGTID…EDQLKLFGFM (64 aa)) is domain I. Residues 65-143 (SALEREWFNL…AFTGDAGSAI (79 aa)) form a domain II region. The flexible linker stretch occupies residues 144 to 153 (GLKQELGEGV). The segment at 153-205 (VASAPVSDAVSALTNLGYSRDQAANAIAAALKNGGEGADSAKLIRLGLKELSR) is domain III.

This sequence belongs to the RuvA family. In terms of assembly, homotetramer. Forms an RuvA(8)-RuvB(12)-Holliday junction (HJ) complex. HJ DNA is sandwiched between 2 RuvA tetramers; dsDNA enters through RuvA and exits via RuvB. An RuvB hexamer assembles on each DNA strand where it exits the tetramer. Each RuvB hexamer is contacted by two RuvA subunits (via domain III) on 2 adjacent RuvB subunits; this complex drives branch migration. In the full resolvosome a probable DNA-RuvA(4)-RuvB(12)-RuvC(2) complex forms which resolves the HJ.

It localises to the cytoplasm. Functionally, the RuvA-RuvB-RuvC complex processes Holliday junction (HJ) DNA during genetic recombination and DNA repair, while the RuvA-RuvB complex plays an important role in the rescue of blocked DNA replication forks via replication fork reversal (RFR). RuvA specifically binds to HJ cruciform DNA, conferring on it an open structure. The RuvB hexamer acts as an ATP-dependent pump, pulling dsDNA into and through the RuvAB complex. HJ branch migration allows RuvC to scan DNA until it finds its consensus sequence, where it cleaves and resolves the cruciform DNA. The sequence is that of Holliday junction branch migration complex subunit RuvA from Allorhizobium ampelinum (strain ATCC BAA-846 / DSM 112012 / S4) (Agrobacterium vitis (strain S4)).